A 68-amino-acid polypeptide reads, in one-letter code: Serine rich endogenous peptide 22 (68 aa).

Residues 1-25 (MNKALVWLITLLFLIFSATPNRVLA) form the signal peptide. Positions 50 to 64 (KIGVGASNSGHSPGA) match the SCOOP motif motif. The SxS motif essential for MIK2 binding signature appears at 56–58 (SNS).

It belongs to the serine rich endogenous peptide (SCOOP) phytocytokine family. As to quaternary structure, interacts with MIK2 (via extracellular leucine-rich repeat domain); this interaction triggers the formation of complex between MIK2 and the BAK1/SERK3 and SERK4 coreceptors, and subsequent BAK1 activation by phosphorylation.

It localises to the cell membrane. It is found in the secreted. The protein resides in the extracellular space. The protein localises to the apoplast. Brassicaceae-specific phytocytokine (plant endogenous peptide released into the apoplast) perceived by MIK2 in a BAK1/SERK3 and SERK4 coreceptors-dependent manner, that modulates various physiological and antimicrobial processes including growth prevention and reactive oxygen species (ROS) response regulation. This chain is Serine rich endogenous peptide 22, found in Arabidopsis thaliana (Mouse-ear cress).